The chain runs to 829 residues: MEEKRRKYSISSDNSDTTDGHVTSTSASRCSKLPSSTKSGWPRQNEKKPSEVFRTDLITAMKIPDSYQLSPDDYYILADPWRQEWEKGVQVPAGAEAIPEPVVRLLPPLKGPPTQMSPDSPTLGEGAHPDWPGGSRYDLDEIDAYWLELLNSELKEMEKPELDELTLERVLEELETLCHQNMAQAIETQEGLGIEYDEDVVCDVCRSPEGEDGNEMVFCDKCNVCVHQACYGILKVPTGSWLCRTCALGVQPKCLLCPKRGGALKPTRSGTKWVHVSCALWIPEVSIGCPEKMEPITKISHIPASRWALSCSLCKECTGTCIQCSMPSCITAFHVTCAFDRGLEMRTILADNDEVKFKSLCQEHSDGGPRSEPTSEPVEPSQAVEDLEKVTLRKQRLQQLEENFYELVEPAEVAERLDLAEALVDFIYQYWKLKRRANANQPLLTPKTDEVDNLAQQEQDVLYRRLKLFTHLRQDLERVRNLCYMVTRRERTKHTICKLQEQIFHLQMKLIEQDLCREPSGRRSKGKKNDSKRKGREGPKGSSPEKKEKVKAGPESVLGQLGLSTSFPIDGTFFNSWLAQSVQITAEDMAMSEWSLNSGHREDPAPGLLSEELLQDEETLLSFMRDPSLRPGDPARKARGRTRLPAKKKPSPLQDGPSARTTPDKQPKKAWAQDGKGTQGPPMRKPPRRTSSHLPSSPAAGDCPVPATLESPPPLASEILDKTAPMASDLNVQVPGPTVSPKPLGRLRPPREMKVSRKSPGARSDAGTGLPSAVAERPKVSLHFDTEADGYFSDEEMSDSEVEAEDSGVQRASREAGAEEVVRMGVLAS.

Residues 1–52 (MEEKRRKYSISSDNSDTTDGHVTSTSASRCSKLPSSTKSGWPRQNEKKPSEV) are disordered. A phosphoserine mark is found at Ser-9 and Ser-15. Polar residues predominate over residues 9–39 (SISSDNSDTTDGHVTSTSASRCSKLPSSTKS). N6-acetyllysine is present on residues Lys-32 and Lys-38. Ser-117 carries the phosphoserine modification. A PHD-type 1 zinc finger spans residues 199–249 (DVVCDVCRSPEGEDGNEMVFCDKCNVCVHQACYGILKVPTGSWLCRTCALG). The C2HC pre-PHD-type zinc finger occupies 251–285 (QPKCLLCPKRGGALKPTRSGTKWVHVSCALWIPEV). Lys-298 carries the post-translational modification N6-acetyllysine. A PHD-type 2 zinc finger spans residues 309–365 (LSCSLCKECTGTCIQCSMPSCITAFHVTCAFDRGLEMRTILADNDEVKFKSLCQEHS). 3 disordered regions span residues 362-383 (QEHSDGGPRSEPTSEPVEPSQA), 517-555 (REPSGRRSKGKKNDSKRKGREGPKGSSPEKKEKVKAGPE), and 622-817 (SFMR…REAG). Basic residues predominate over residues 522–535 (RRSKGKKNDSKRKG). Positions 536 to 552 (REGPKGSSPEKKEKVKA) are enriched in basic and acidic residues. A compositionally biased stretch (basic residues) spans 637–650 (KARGRTRLPAKKKP). Over residues 776–786 (ERPKVSLHFDT) the composition is skewed to basic and acidic residues. Over residues 792 to 806 (FSDEEMSDSEVEAED) the composition is skewed to acidic residues.

The protein belongs to the JADE family. In terms of assembly, component of the HBO1 complex composed at least of ING4 or ING5, MYST2/HBO1, MEAF6, and one of JADE1, JADE2 and JADE3. Interacts (via C-terminus) with KDM1A (via AOD/Tower domain).

The catalysed reaction is S-ubiquitinyl-[E2 ubiquitin-conjugating enzyme]-L-cysteine + [acceptor protein]-L-lysine = [E2 ubiquitin-conjugating enzyme]-L-cysteine + N(6)-ubiquitinyl-[acceptor protein]-L-lysine.. It functions in the pathway protein modification; protein ubiquitination. Scaffold subunit of some HBO1 complexes, which have a histone H4 acetyltransferase activity. Acts as a E3 ubiquitin-protein ligase mediating the ubiquitination and subsequent proteasomal degradation of target protein histone demethylase KDM1A. Also acts as a ubiquitin ligase E3 toward itself. Positive regulator of neurogenesis. This chain is E3 ubiquitin-protein ligase Jade-2 (Jade2), found in Mus musculus (Mouse).